We begin with the raw amino-acid sequence, 66 residues long: Alpha-conotoxin GID (66 aa).

The first 21 residues, 1 to 21 (MGMRMMFTVFLLVVLAATIVS), serve as a signal peptide directing secretion. A propeptide spanning residues 22–44 (FTSDRASDGRNVAAKAFHRIGRT) is cleaved from the precursor. The segment at 45–48 (IRDE) is N-terminal tail important for activity on alpha-3-beta-2/CHRNA3-CHRNB2 and alpha-4-beta-2/CHRNA4-CHRNB2 nAChR. Position 48 is a 4-carboxyglutamate (Glu48). Cystine bridges form between Cys49/Cys55 and Cys50/Cys63. Residues 51 to 53 (SNP) form a ser-Xaa-Pro motif, crucial for potent interaction with nAChR region. A 4-hydroxyproline modification is found at Pro60.

It belongs to the conotoxin A superfamily. Post-translationally, gamma-carboxyglutamation of Glu-48 seems to be not important for nAChR inhibition, since synthetic peptides without this modification do not show change in inhibition of alpha-7/CHRNA7 and alpha-3-beta-2/CHRNA3-CHRNB2 nAChR and show a 2.3-fold increase in inhibition of alpha-4-beta-2/CHRNA4-CHRNB2 nAChR. Hydroxylation of Pro-60 seems to be important for nAChR inhibition, since synthetic peptides without this modification show a small decrease in inhibition of alpha-7/CHRNA7 and alpha-3-beta-2/CHRNA3-CHRNB2 nAChR and a very important decrease in inhibition of alpha-4-beta-2/CHRNA4-CHRNB2 nAChR. In terms of processing, an amidation of Cys-63 increases potency against alpha-7/CHRNA7 (2.6-fold) and alpha-3-beta-2/CHRNA3-CHRNB2 (2-fold) nAChR. On the other hand, the peptide has no more activity on alpha-4-beta-2/CHRNA4-CHRNB2 nAChR with an amidated Cys-63. As to expression, expressed by the venom duct.

It localises to the secreted. Functionally, alpha-conotoxins act on postsynaptic membranes, they bind to the nicotinic acetylcholine receptors (nAChR) and thus inhibit them. This toxin reversibly blocks alpha-3-beta-2/CHRNA3-CHRNB2 (IC(50)=3.1-5.1 nM), alpha-7/CHRNA7 (IC(50)=4.5-5.1 nM), and alpha-4-beta-2/CHRNA4-CHRNB2 (IC(50)=128.6-390 nM) nAChRs. The chain is Alpha-conotoxin GID from Conus geographus (Geography cone).